We begin with the raw amino-acid sequence, 188 residues long: dTTP/UTP pyrophosphatase (188 aa).

Aspartate 70 acts as the Proton acceptor in catalysis.

This sequence belongs to the Maf family. YhdE subfamily. A divalent metal cation is required as a cofactor.

It localises to the cytoplasm. The catalysed reaction is dTTP + H2O = dTMP + diphosphate + H(+). The enzyme catalyses UTP + H2O = UMP + diphosphate + H(+). Its function is as follows. Nucleoside triphosphate pyrophosphatase that hydrolyzes dTTP and UTP. May have a dual role in cell division arrest and in preventing the incorporation of modified nucleotides into cellular nucleic acids. The polypeptide is dTTP/UTP pyrophosphatase (Clostridium botulinum (strain Eklund 17B / Type B)).